The sequence spans 280 residues: Rhomboid-like protein 11, chloroplastic (280 aa).

The N-terminal 57 residues, 1 to 57, are a transit peptide targeting the chloroplast; it reads MSQLLHLHRLSLPQSSLRFRFPPLHRRRAASSPTNSTQPPLQFRPLTVSRSQITCRF. The Stromal portion of the chain corresponds to 58 to 82; it reads SQSDITPQFELDKAKDNRKPQKRAN. The helical transmembrane segment at 83–103 threads the bilayer; that stretch reads GIFWIILINLGIYLADHFFQV. The Chloroplast intermembrane segment spans residues 104-117; sequence RGIKSLYLYHNFPA. The helical transmembrane segment at 118–140 threads the bilayer; that stretch reads WYQFVTATFCHANWNHLSSNLFF. The Stromal segment spans residues 141–154; that stretch reads LYIFGKLVEEEEGN. Residues 155–175 form a helical membrane-spanning segment; that stretch reads FGLWLSYLFTGVGANLVSWLV. Topologically, residues 176 to 178 are chloroplast intermembrane; the sequence is LPR. The helical transmembrane segment at 179-199 threads the bilayer; the sequence is NAVSVGASGAVFGLFAISVLV. Ser186 functions as the Nucleophile in the catalytic mechanism. Residues 200–243 are Stromal-facing; that stretch reads KMSWDWRKILEVLILGQFVIERVMEAAQASAGLSGTIYGGYSLQ. The chain crosses the membrane as a helical span at residues 244-264; it reads TVNHIAHLSGALVGVVLVWLL. Residue His250 is the Charge relay system of the active site. The Chloroplast intermembrane portion of the chain corresponds to 265–280; sequence SKFPSASMDQDVKKSS.

Belongs to the peptidase S54 family. Homooligomer.

It is found in the plastid. The protein localises to the chloroplast inner membrane. Its function is as follows. Rhomboid-type serine protease that catalyzes intramembrane proteolysis. May be involved in TIC22 processing during its import. The sequence is that of Rhomboid-like protein 11, chloroplastic from Arabidopsis thaliana (Mouse-ear cress).